Here is a 218-residue protein sequence, read N- to C-terminus: Glutathione S-transferase U24 (218 aa).

Residues 3-82 (DEVILLDFWA…YIDETWPDNN (80 aa)) enclose the GST N-terminal domain. Glutathione-binding positions include 13–14 (SM), 39–40 (NK), 53–54 (KI), and 66–67 (ES). One can recognise a GST C-terminal domain in the interval 88–215 (DPYKRAHAKF…TFISERRKKL (128 aa)). At threonine 148 the chain carries Phosphothreonine.

It belongs to the GST superfamily. Tau family.

Its subcellular location is the cytoplasm. The protein localises to the cytosol. The catalysed reaction is RX + glutathione = an S-substituted glutathione + a halide anion + H(+). May be involved in the conjugation of reduced glutathione to a wide number of exogenous and endogenous hydrophobic electrophiles and have a detoxification role against certain herbicides. In Arabidopsis thaliana (Mouse-ear cress), this protein is Glutathione S-transferase U24 (GSTU24).